The primary structure comprises 393 residues: Lipid-A-disaccharide synthase (393 aa).

It belongs to the LpxB family.

It carries out the reaction a lipid X + a UDP-2-N,3-O-bis[(3R)-3-hydroxyacyl]-alpha-D-glucosamine = a lipid A disaccharide + UDP + H(+). Its pathway is bacterial outer membrane biogenesis; LPS lipid A biosynthesis. In terms of biological role, condensation of UDP-2,3-diacylglucosamine and 2,3-diacylglucosamine-1-phosphate to form lipid A disaccharide, a precursor of lipid A, a phosphorylated glycolipid that anchors the lipopolysaccharide to the outer membrane of the cell. This chain is Lipid-A-disaccharide synthase, found in Bordetella petrii (strain ATCC BAA-461 / DSM 12804 / CCUG 43448).